Reading from the N-terminus, the 398-residue chain is 1-deoxy-D-xylulose 5-phosphate reductoisomerase (398 aa).

Positions 10, 11, 12, 13, 36, 37, 38, and 124 each coordinate NADPH. Position 125 (K125) interacts with 1-deoxy-D-xylulose 5-phosphate. NADPH is bound at residue E126. Mn(2+) is bound at residue D150. The 1-deoxy-D-xylulose 5-phosphate site is built by S151, E152, S186, and H209. Residue E152 coordinates Mn(2+). G215 contacts NADPH. Residues S222, N227, K228, and E231 each contribute to the 1-deoxy-D-xylulose 5-phosphate site. E231 contacts Mn(2+).

This sequence belongs to the DXR family. In terms of assembly, homodimer. Mg(2+) serves as cofactor. It depends on Mn(2+) as a cofactor.

It catalyses the reaction 2-C-methyl-D-erythritol 4-phosphate + NADP(+) = 1-deoxy-D-xylulose 5-phosphate + NADPH + H(+). Its pathway is isoprenoid biosynthesis; isopentenyl diphosphate biosynthesis via DXP pathway; isopentenyl diphosphate from 1-deoxy-D-xylulose 5-phosphate: step 1/6. Catalyzes the NADPH-dependent rearrangement and reduction of 1-deoxy-D-xylulose-5-phosphate (DXP) to 2-C-methyl-D-erythritol 4-phosphate (MEP). This Salmonella paratyphi A (strain ATCC 9150 / SARB42) protein is 1-deoxy-D-xylulose 5-phosphate reductoisomerase.